The sequence spans 266 residues: Enterotoxin type C-2 (266 aa).

Positions 1-27 (MNKSRFISCVILIFALILVLFTPNVLA) are cleaved as a signal peptide. Residues D36, H74, E98, E107, and D110 each coordinate Zn(2+). C120 and C137 are oxidised to a cystine. Zn(2+) is bound by residues H145, E146, and H149.

The protein belongs to the staphylococcal/streptococcal toxin family. In terms of assembly, interacts with host MHC class II molecules composed of alpha/HLA-DRA and beta/HLA-DRB1 chains. The cofactor is Zn(2+).

The protein localises to the secreted. Functionally, staphylococcal enterotoxin that activates the host immune system by binding as unprocessed molecules to major histocompatibility (MHC) complex class II and T-cell receptor (TCR) molecules. In turn, this ternary complex activates a large number of T-lymphocytes initiating a systemic release of pro-inflammatory cytokines. Also causes the intoxication staphylococcal food poisoning syndrome. This Staphylococcus aureus protein is Enterotoxin type C-2 (entC2).